The chain runs to 208 residues: Type 4 adapter protein LvgA (208 aa).

The T4BSS is a complex nanomachine composed of several subcomplexes. This subunit is part of the Type IV Coupling Complex (T4CC), a subcomplex composed of the DotLMNYZ core and the IcmSW-LvgA adapter subunits, linked by the C-terminal tail of DotL. Interacts with DotL, IcmS and IcmW. Interacts with various effector proteins, including VpdB, SetA, PieA and SidH.

It is found in the cytoplasm. Functionally, component of the Dot/Icm type IVB secretion system (T4BSS), which is used to inject bacterial effector proteins into eukaryotic host cells. Part of a subcomplex which recruits effector proteins and delivers them to the core transmembrane subcomplex. Is a critical subunit for binding a subset of effector proteins. Recognizes more than one type of binding motif. May be a critical factor that confers host specificity. In Legionella pneumophila subsp. pneumophila (strain Philadelphia 1 / ATCC 33152 / DSM 7513), this protein is Type 4 adapter protein LvgA.